Reading from the N-terminus, the 173-residue chain is uncharacterized protein (173 aa).

Residues 1–21 traverse the membrane as a helical segment; the sequence is MFIVFYLILIIFIFIYFHVYI.

It to T.pallidum TP0711.

Its subcellular location is the membrane. This is an uncharacterized protein from Borreliella burgdorferi (strain ATCC 35210 / DSM 4680 / CIP 102532 / B31) (Borrelia burgdorferi).